The following is a 589-amino-acid chain: Glucose starvation modulator protein 1 (589 aa).

The segment at residues 20–48 (CVFCHQKHLQCSNERPCKNCVKRNIGHEC) is a DNA-binding region (zn(2)-C6 fungal-type). Disordered stretches follow at residues 59–90 (LTGN…PSVA), 218–240 (NNSN…NPEP), and 340–362 (ANGQ…PGNG). Polar residues predominate over residues 80–90 (TPITASSPSVA). The segment covering 347 to 357 (LLDHNKDDSRK) has biased composition (basic and acidic residues). Residues 471–542 (SLLDYKKLVE…FKFFKNIAVN (72 aa)) form the PAS domain.

The protein belongs to the ERT1/acuK family.

The protein localises to the nucleus. In terms of biological role, transcription factor which regulates nonfermentable carbon utilization. This chain is Glucose starvation modulator protein 1 (GSM1), found in Candida tropicalis (strain ATCC MYA-3404 / T1) (Yeast).